A 1178-amino-acid chain; its full sequence is Integrin alpha-2 (1178 aa).

Residues 1–26 (MGPGQAGGALLLRLLMLVQGILNCLA) form the signal peptide. Over 27-1129 (YNVGLPGAKI…KPTEKAEVPT (1103 aa)) the chain is Extracellular. FG-GAP repeat units follow at residues 31 to 89 (LPGA…TATC) and 98 to 158 (ASIS…FLTS). Cysteine 80 and cysteine 89 are oxidised to a cystine. Residues asparagine 102 and asparagine 109 are each glycosylated (N-linked (GlcNAc...) asparagine). The VWFA domain maps to 185–362 (WEAVKNFLVK…TLGEQIFSIE (178 aa)). 5 FG-GAP repeats span residues 363-417 (GTVQ…VIFP), 420-472 (AFDQ…KQGN), 474-536 (TVIQ…ILNQ), 537-595 (HQFL…TIRT), and 601-661 (ILGS…FTPD). N-linked (GlcNAc...) asparagine glycans are attached at residues asparagine 429, asparagine 457, and asparagine 472. Residues 480–482 (RGD) carry the Cell attachment site motif. Ca(2+) contacts are provided by aspartate 496, aspartate 498, aspartate 500, aspartate 504, aspartate 560, asparagine 562, aspartate 564, aspartate 568, aspartate 624, asparagine 626, aspartate 628, and aspartate 632. Intrachain disulfides connect cysteine 677–cysteine 734, cysteine 786–cysteine 792, cysteine 862–cysteine 873, cysteine 1016–cysteine 1047, and cysteine 1052–cysteine 1057. The N-linked (GlcNAc...) asparagine glycan is linked to asparagine 696. N-linked (GlcNAc...) asparagine glycosylation is found at asparagine 1054, asparagine 1071, and asparagine 1078. The chain crosses the membrane as a helical span at residues 1130 to 1151 (GVIIGSIIAGILLLLAMTAGLW). The Cytoplasmic portion of the chain corresponds to 1152 to 1178 (KLGFFKRQYKKMGQNPDEMDETTELNS). The GFFKR motif signature appears at 1154 to 1158 (GFFKR).

It belongs to the integrin alpha chain family. Heterodimer of an alpha and a beta subunit. Alpha-2 associates with beta-1. Interacts with HPS5 and RAB21.

The protein localises to the membrane. Integrin alpha-2/beta-1 is a collagen receptor, being responsible for adhesion of platelets and other cells to collagens, modulation of collagen and collagenase gene expression, force generation and organization of newly synthesized extracellular matrix. It is also a receptor for laminins, collagen C-propeptides and E-cadherin. Mice homozygous for a null mutation in the alpha-2 die very early in embryogenesis. This Mus musculus (Mouse) protein is Integrin alpha-2 (Itga2).